A 297-amino-acid chain; its full sequence is Cyclin-dependent kinase 1 (297 aa).

The Protein kinase domain occupies 4–293 (YQKVEKIGEG…AKRALQQNYL (290 aa)). Residues 10–18 (IGEGTYGVV) and Lys-33 contribute to the ATP site. Position 14 is a phosphothreonine (Thr-14). A Phosphotyrosine modification is found at Tyr-15. Asp-134 functions as the Proton acceptor in the catalytic mechanism. Position 167 is a phosphothreonine (Thr-167).

This sequence belongs to the protein kinase superfamily. CMGC Ser/Thr protein kinase family. CDC2/CDKX subfamily. In terms of assembly, forms a stable but non-covalent complex with regulatory subunit suc1 and with a cyclin. Interacts with cyclin cdc13. Interacts with cyclin cig2. Interacts with cdc37.

The protein localises to the cytoplasm. The enzyme catalyses L-seryl-[protein] + ATP = O-phospho-L-seryl-[protein] + ADP + H(+). It catalyses the reaction L-threonyl-[protein] + ATP = O-phospho-L-threonyl-[protein] + ADP + H(+). With respect to regulation, phosphorylation at Thr-14 or Tyr-15 inactivates the enzyme, while phosphorylation at Thr-167 activates it. Functionally, cyclin-dependent kinase that acts as a master regulator of the mitotic and meiotic cell cycles. Required to drive the G1-S and G2-M transitions, and initiation of premeiotic DNA replication and meiosis II. More than 200 substrates have been identified. Substrate specificity is in part regulated by the bound cyclin protein. When complexed with cyclin cig2, it drives the G1-S phase transition. When complexed with cyclin cdc13, it drives the G2-M transition and initiation of meiosis II. Its activity rises throughout the cell cycle and substrate specificity is further influenced by activity thresholds with more sensitive substrates phosphorylated earlier in the cell cycle than less sensitive substrates. Phosphorylates dis1 during metaphase to ensure proper microtubule dynamics and accurate chromosome segregation. Phosphorylates the repetitive C-terminus of the large subunit of RNA polymerase II rpb1. Inactivated by checkpoint signaling following detection of cellular damage, leading to cell cycle arrest to allow damage repair. Inactivated during G2 DNA damage checkpoint signaling. Inactivated in response to defective RNA splicing. The chain is Cyclin-dependent kinase 1 from Schizosaccharomyces pombe (strain 972 / ATCC 24843) (Fission yeast).